Reading from the N-terminus, the 517-residue chain is Succinyl-CoA:3-ketoacid coenzyme A transferase 2, mitochondrial (517 aa).

Residues 1–39 constitute a mitochondrion transit peptide; that stretch reads MAALRLLASVLGRGVPAGGSGLALSQGCARCFATSPRLR. The 5-glutamyl coenzyme A thioester intermediate role is filled by Glu-341.

This sequence belongs to the 3-oxoacid CoA-transferase family. In terms of assembly, homodimer. In terms of tissue distribution, testis specific.

The protein resides in the mitochondrion. It catalyses the reaction a 3-oxo acid + succinyl-CoA = a 3-oxoacyl-CoA + succinate. It participates in ketone metabolism; succinyl-CoA degradation; acetoacetyl-CoA from succinyl-CoA: step 1/1. Functionally, key enzyme for ketone body catabolism. Transfers the CoA moiety from succinate to acetoacetate. Formation of the enzyme-CoA intermediate proceeds via an unstable anhydride species formed between the carboxylate groups of the enzyme and substrate. The protein is Succinyl-CoA:3-ketoacid coenzyme A transferase 2, mitochondrial (OXCT2) of Homo sapiens (Human).